We begin with the raw amino-acid sequence, 338 residues long: Glyceraldehyde-3-phosphate dehydrogenase (338 aa).

Residues 12–13 (RI), Asp34, and Arg79 contribute to the NAD(+) site. Residues 150-152 (SCT), Thr181, 210-211 (TG), and Arg233 each bind D-glyceraldehyde 3-phosphate. Residue Cys151 is the Nucleophile of the active site. Asn315 provides a ligand contact to NAD(+).

Belongs to the glyceraldehyde-3-phosphate dehydrogenase family. Homotetramer.

It is found in the cytoplasm. The catalysed reaction is D-glyceraldehyde 3-phosphate + phosphate + NAD(+) = (2R)-3-phospho-glyceroyl phosphate + NADH + H(+). Its pathway is carbohydrate degradation; glycolysis; pyruvate from D-glyceraldehyde 3-phosphate: step 1/5. This is Glyceraldehyde-3-phosphate dehydrogenase (gpd1) from Hypocrea atroviridis (Trichoderma atroviride).